We begin with the raw amino-acid sequence, 252 residues long: Proteasome subunit alpha 1 (252 aa).

Met-1 bears the N-acetylmethionine; alternate mark.

Belongs to the peptidase T1A family. The 20S proteasome core is composed of 14 alpha and 14 beta subunits that assemble into four stacked heptameric rings, resulting in a barrel-shaped structure. The two inner rings, each composed of seven catalytic beta subunits, are sandwiched by two outer rings, each composed of seven alpha subunits. H.volcanii produces at least 2 types of 20S proteasomes: an alpha1-beta proteasome and a proteasome containing all three subunits (alpha1, alpha2, and beta) that appears to be asymmetrical with homo-oligomeric alpha1 and alpha2 rings positioned on separate ends. The catalytic chamber with the active sites is on the inside of the barrel. Has probably a gated structure, the ends of the cylinder being occluded by the N-termini of the alpha-subunits. Is likely capped at one or both ends by the proteasome regulatory ATPase, PAN. In terms of processing, acetylated. The acetylated form at Met-1 was shown to be in 100-fold excess of the unacetylated form with the initiator methionine removed in whole cells and purified 20S proteasomes.

It localises to the cytoplasm. The formation of the proteasomal ATPase PAN-20S proteasome complex, via the docking of the C-termini of PAN into the intersubunit pockets in the alpha-rings, triggers opening of the gate for substrate entry. Interconversion between the open-gate and close-gate conformations leads to a dynamic regulation of the 20S proteasome proteolysis activity. In vitro, the chymotrypsin-like activity of the alpha1-beta proteasome is potently inhibited by carbobenzoxyl-leucinyl-leucinyl-leucinal-H (MG132) and significantly by N-acetyl-leucinyl-leucinyl-norleucinal-H (calpain inhibitor I). Functionally, component of the proteasome core, a large protease complex with broad specificity involved in protein degradation. The H.volcanii alpha1-beta proteasome is able to cleave oligopeptides after Phe, Tyr and Trp, poorly after Glu but not after Arg. Thus, displays chymotrypsin-like activity, low caspase-like activity but no trypsin-like activity. The protein is Proteasome subunit alpha 1 of Haloferax volcanii (strain ATCC 29605 / DSM 3757 / JCM 8879 / NBRC 14742 / NCIMB 2012 / VKM B-1768 / DS2) (Halobacterium volcanii).